Reading from the N-terminus, the 173-residue chain is Archaemetzincin (173 aa).

Residue histidine 130 participates in Zn(2+) binding. Residue glutamate 131 is the Proton acceptor of the active site. Zn(2+) contacts are provided by histidine 134, histidine 140, cysteine 141, cysteine 146, cysteine 165, and cysteine 168.

Belongs to the peptidase M54 family. In terms of assembly, monomer. Zn(2+) serves as cofactor.

Its function is as follows. Probable zinc metalloprotease whose natural substrate is unknown. This Haloquadratum walsbyi (strain DSM 16790 / HBSQ001) protein is Archaemetzincin.